The primary structure comprises 331 residues: Pantothenate kinase (331 aa).

109–116 (GSVAVGKS) contacts ATP.

The protein belongs to the prokaryotic pantothenate kinase family.

The protein localises to the cytoplasm. The catalysed reaction is (R)-pantothenate + ATP = (R)-4'-phosphopantothenate + ADP + H(+). Its pathway is cofactor biosynthesis; coenzyme A biosynthesis; CoA from (R)-pantothenate: step 1/5. This is Pantothenate kinase from Sinorhizobium fredii (strain NBRC 101917 / NGR234).